A 76-amino-acid polypeptide reads, in one-letter code: DNA-directed RNA polymerase subunit epsilon (76 aa).

This sequence belongs to the RNA polymerase subunit epsilon family. RNAP is composed of a core of 2 alpha, a beta and a beta' subunit. The core is associated with a delta subunit, and at least one of epsilon or omega. When a sigma factor is associated with the core the holoenzyme is formed, which can initiate transcription.

The catalysed reaction is RNA(n) + a ribonucleoside 5'-triphosphate = RNA(n+1) + diphosphate. In terms of biological role, a non-essential component of RNA polymerase (RNAP). The sequence is that of DNA-directed RNA polymerase subunit epsilon from Streptococcus equi subsp. zooepidemicus (strain H70).